The sequence spans 469 residues: NADH-quinone oxidoreductase subunit N (469 aa).

14 consecutive transmembrane segments (helical) span residues 2–22 (IALL…FLCV), 28–48 (RYSI…FFIV), 70–90 (FSFC…ISSF), 101–121 (EMFA…LSVE), 122–142 (LILT…MIAM), 157–177 (FLLS…VFGV), 194–214 (FLSI…IAIF), 233–253 (GFLA…LCFL), 261–281 (ILQG…NLLS), 290–310 (ILIA…SSVG), 315–335 (IYPA…LFAI), 361–381 (AFAF…VGFL), 398–418 (LAIF…KIII), and 447–467 (ILFI…LNLF).

Belongs to the complex I subunit 2 family. In terms of assembly, NDH-1 is composed of 14 different subunits. Subunits NuoA, H, J, K, L, M, N constitute the membrane sector of the complex.

The protein localises to the cell inner membrane. The catalysed reaction is a quinone + NADH + 5 H(+)(in) = a quinol + NAD(+) + 4 H(+)(out). NDH-1 shuttles electrons from NADH, via FMN and iron-sulfur (Fe-S) centers, to quinones in the respiratory chain. The immediate electron acceptor for the enzyme in this species is believed to be ubiquinone. Couples the redox reaction to proton translocation (for every two electrons transferred, four hydrogen ions are translocated across the cytoplasmic membrane), and thus conserves the redox energy in a proton gradient. The sequence is that of NADH-quinone oxidoreductase subunit N from Campylobacter fetus subsp. fetus (strain 82-40).